The primary structure comprises 295 residues: Bifunctional protein FolD (295 aa).

NADP(+)-binding positions include 166 to 168 (GRS), serine 195, and isoleucine 236.

Belongs to the tetrahydrofolate dehydrogenase/cyclohydrolase family. In terms of assembly, homodimer.

The enzyme catalyses (6R)-5,10-methylene-5,6,7,8-tetrahydrofolate + NADP(+) = (6R)-5,10-methenyltetrahydrofolate + NADPH. It carries out the reaction (6R)-5,10-methenyltetrahydrofolate + H2O = (6R)-10-formyltetrahydrofolate + H(+). It participates in one-carbon metabolism; tetrahydrofolate interconversion. In terms of biological role, catalyzes the oxidation of 5,10-methylenetetrahydrofolate to 5,10-methenyltetrahydrofolate and then the hydrolysis of 5,10-methenyltetrahydrofolate to 10-formyltetrahydrofolate. In Chlorobium phaeobacteroides (strain DSM 266 / SMG 266 / 2430), this protein is Bifunctional protein FolD.